A 204-amino-acid polypeptide reads, in one-letter code: ATP-dependent Clp protease proteolytic subunit (204 aa).

The active-site Nucleophile is Ser102. His127 is an active-site residue.

Belongs to the peptidase S14 family. Fourteen ClpP subunits assemble into 2 heptameric rings which stack back to back to give a disk-like structure with a central cavity, resembling the structure of eukaryotic proteasomes.

Its subcellular location is the cytoplasm. It catalyses the reaction Hydrolysis of proteins to small peptides in the presence of ATP and magnesium. alpha-casein is the usual test substrate. In the absence of ATP, only oligopeptides shorter than five residues are hydrolyzed (such as succinyl-Leu-Tyr-|-NHMec, and Leu-Tyr-Leu-|-Tyr-Trp, in which cleavage of the -Tyr-|-Leu- and -Tyr-|-Trp bonds also occurs).. Functionally, cleaves peptides in various proteins in a process that requires ATP hydrolysis. Has a chymotrypsin-like activity. Plays a major role in the degradation of misfolded proteins. The chain is ATP-dependent Clp protease proteolytic subunit from Neisseria meningitidis serogroup C (strain 053442).